The primary structure comprises 401 residues: Type 3 secretion system translocon protein SctE (401 aa).

The stretch at I129–S160 forms a coiled coil. Transmembrane regions (helical) follow at residues V176–V196 and I224–T244. Residues L345–L379 are a coiled coil.

The protein belongs to the SctE/SipB/YopB family. In terms of assembly, the core secretion machinery of the T3SS is composed of approximately 20 different proteins, including cytoplasmic components, a base, an export apparatus and a needle. This subunit is involved in the formation of a pore, called the translocon, in host membrane. Interacts with YopD/SctB. Together with YopD/SctB, forms a multimeric integral membrane complex.

It is found in the secreted. The protein resides in the host membrane. Its function is as follows. Component of the type III secretion system (T3SS), also called injectisome, which is used to inject bacterial effector proteins into eukaryotic host cells. YopB/SctE and YopD/SctB are inserted into the host membrane where they form a pore and allow the translocation of effector proteins into the cytosol of target cells. Is an essential virulence determinant. Required for YopE and YopH translocation. Shows membrane disruptive activity in vitro. Interaction with the host cell triggers a signaling response, via activation of the small GTPase Ras, the MAPK kinases ERK and JNK and the nuclear factor NF-kappa-B pathways, and production of the proinflammatory cytokine interleukin-8 (IL-8). YopB/SctE-dependent signaling response is counteracted by YopE, YopH and YopJ in infected host cells. YopB/SctE is directly responsible for signaling and its insertion in the membrane is important to activate the signaling response in the host cell. In Yersinia pseudotuberculosis serotype I (strain IP32953), this protein is Type 3 secretion system translocon protein SctE.